The primary structure comprises 61 residues: Small ribosomal subunit protein uS14B (61 aa).

4 residues coordinate Zn(2+): cysteine 24, cysteine 27, cysteine 40, and cysteine 43.

The protein belongs to the universal ribosomal protein uS14 family. Zinc-binding uS14 subfamily. As to quaternary structure, part of the 30S ribosomal subunit. Contacts proteins S3 and S10. Zn(2+) is required as a cofactor.

In terms of biological role, binds 16S rRNA, required for the assembly of 30S particles and may also be responsible for determining the conformation of the 16S rRNA at the A site. The sequence is that of Small ribosomal subunit protein uS14B from Rhodococcus jostii (strain RHA1).